The following is a 482-amino-acid chain: MKIRTRYAPSPTGYLHIGGARTALFNYLLAKAYDGDFIIRIEDTDVERNVEGGIDSQFNFLEWMGIVADESIRNPKTFGPYIQSQKLKHYEALALDLVAQKKAYFCFCSKERLDADRELAEKLHETPKYKRHCLNLNEQTIQANLLANKEYTIRLKIDENNEYSWDDLIRGKISIPGSALTDPVILKSNKIAMYNFAVVIDDYEMQISHVIRGEEHISNTPYQLAIAQALNYDLSKIKYGHLSIIVDETGKKLSKRNLALKQFVSDYEKDGYWPHAITNFVALLGWSPKNNQEIMSLVEMVENFDVNNLSKSPAFFDINKMNWFSTQYFNNISQDEFIDFVKTHPLTKELVLKDTTFIDKALLFKSHIVNLKQLINLVDEQFNSNKQLLEEDVNHIKNNQLTNVVQVFYEQLIVSEKFDEQSIKEVIKQVQKTTNNKGANLYMPIRIATTFSSHGPELAKTIYYLGRENVLKNLQSILKVLG.

The short motif at Pro9–Gly19 is the 'HIGH' region element. The 'KMSKS' region signature appears at Lys252 to Arg256. Lys255 provides a ligand contact to ATP.

It belongs to the class-I aminoacyl-tRNA synthetase family. Glutamate--tRNA ligase type 1 subfamily. As to quaternary structure, monomer.

It is found in the cytoplasm. The enzyme catalyses tRNA(Glu) + L-glutamate + ATP = L-glutamyl-tRNA(Glu) + AMP + diphosphate. Its function is as follows. Catalyzes the attachment of glutamate to tRNA(Glu) in a two-step reaction: glutamate is first activated by ATP to form Glu-AMP and then transferred to the acceptor end of tRNA(Glu). The protein is Glutamate--tRNA ligase of Ureaplasma urealyticum serovar 10 (strain ATCC 33699 / Western).